The primary structure comprises 193 residues: Cytochrome c biogenesis ATP-binding export protein CcmA (193 aa).

Positions 9 to 191 (LSASGLAILR…AAGFPVTAEV (183 aa)) constitute an ABC transporter domain. ATP is bound at residue 41 to 48 (GANGAGKT).

This sequence belongs to the ABC transporter superfamily. CcmA exporter (TC 3.A.1.107) family. As to quaternary structure, the complex is composed of two ATP-binding proteins (CcmA) and two transmembrane proteins (CcmB).

Its subcellular location is the cell inner membrane. The catalysed reaction is heme b(in) + ATP + H2O = heme b(out) + ADP + phosphate + H(+). Part of the ABC transporter complex CcmAB involved in the biogenesis of c-type cytochromes; once thought to export heme, this seems not to be the case, but its exact role is uncertain. Responsible for energy coupling to the transport system. The sequence is that of Cytochrome c biogenesis ATP-binding export protein CcmA from Hyphomonas neptunium (strain ATCC 15444).